Here is a 609-residue protein sequence, read N- to C-terminus: Beta-(1--&gt;2)glucan export ATP-binding/permease protein NdvA (609 aa).

One can recognise an ABC transmembrane type-1 domain in the interval 21-311; sequence GWILAGANLL…VVSFINSVFM (291 aa). The next 6 membrane-spanning stretches (helical) occupy residues 22–42, 68–88, 146–166, 167–187, 248–268, and 285–305; these read WILA…PVLF, LLAV…TVAL, EHFA…YINW, RLAI…TLVV, WWAV…LAIF, and IVMF…VVSF. Residues 345–579 enclose the ABC transporter domain; it reads VEFNDVSFSY…GGHFAQLAKA (235 aa). 378 to 385 provides a ligand contact to ATP; the sequence is GPTGAGKS.

It belongs to the ABC transporter superfamily. Beta-(1--&gt;2)glucan exporter (TC 3.A.1.108.1) family. As to quaternary structure, homodimer.

It is found in the cell inner membrane. The enzyme catalyses [(1-&gt;2)-beta-D-glucosyl](n)(in) + ATP + H2O = [(1-&gt;2)-beta-D-glucosyl](n)(out) + ADP + phosphate + H(+). Involved in beta-(1--&gt;2)glucan export. Transmembrane domains (TMD) form a pore in the inner membrane and the ATP-binding domain (NBD) is responsible for energy generation. The sequence is that of Beta-(1--&gt;2)glucan export ATP-binding/permease protein NdvA from Nitrobacter winogradskyi (strain ATCC 25391 / DSM 10237 / CIP 104748 / NCIMB 11846 / Nb-255).